The primary structure comprises 263 residues: Rhomboid-like protease 3 (263 aa).

The next 6 membrane-spanning stretches (helical) occupy residues 37 to 57 (KSIV…CVLS), 86 to 106 (VVTP…LVFI), 121 to 141 (KFLV…MLMQ), 142 to 162 (PWAL…GMAA), 189 to 209 (LIYF…GGFL), and 231 to 251 (VLFY…PPLL). Ser150 functions as the Nucleophile in the catalytic mechanism. His204 is a catalytic residue.

Belongs to the peptidase S54 family.

The protein resides in the membrane. The catalysed reaction is Cleaves type-1 transmembrane domains using a catalytic dyad composed of serine and histidine that are contributed by different transmembrane domains.. Functionally, serine protease involved in intramembrane proteolysis and the subsequent release of polypeptides from their membrane anchors. The polypeptide is Rhomboid-like protease 3 (ROM3) (Toxoplasma gondii).